Reading from the N-terminus, the 354-residue chain is GTPase Obg (354 aa).

The 159-residue stretch at 1 to 159 (MKFLDQCKIY…RWIWLRLKLI (159 aa)) folds into the Obg domain. One can recognise an OBG-type G domain in the interval 160-328 (ADVGLVGLPN…LLRAAYKQVR (169 aa)). Residues 166 to 173 (GLPNAGKS), 191 to 195 (FTTLT), 213 to 216 (DIPG), 280 to 283 (NKID), and 309 to 311 (SGV) contribute to the GTP site. Mg(2+) is bound by residues S173 and T193. The segment covering 335–345 (EEEIDDDEDHV) has biased composition (acidic residues). The disordered stretch occupies residues 335 to 354 (EEEIDDDEDHVDETPGGWTP).

This sequence belongs to the TRAFAC class OBG-HflX-like GTPase superfamily. OBG GTPase family. As to quaternary structure, monomer. Requires Mg(2+) as cofactor.

It is found in the cytoplasm. Its function is as follows. An essential GTPase which binds GTP, GDP and possibly (p)ppGpp with moderate affinity, with high nucleotide exchange rates and a fairly low GTP hydrolysis rate. Plays a role in control of the cell cycle, stress response, ribosome biogenesis and in those bacteria that undergo differentiation, in morphogenesis control. The polypeptide is GTPase Obg (Caulobacter vibrioides (strain ATCC 19089 / CIP 103742 / CB 15) (Caulobacter crescentus)).